The following is a 278-amino-acid chain: Tryptophan synthase alpha chain (278 aa).

Catalysis depends on proton acceptor residues glutamate 49 and aspartate 60.

The protein belongs to the TrpA family. In terms of assembly, tetramer of two alpha and two beta chains.

The enzyme catalyses (1S,2R)-1-C-(indol-3-yl)glycerol 3-phosphate + L-serine = D-glyceraldehyde 3-phosphate + L-tryptophan + H2O. It participates in amino-acid biosynthesis; L-tryptophan biosynthesis; L-tryptophan from chorismate: step 5/5. In terms of biological role, the alpha subunit is responsible for the aldol cleavage of indoleglycerol phosphate to indole and glyceraldehyde 3-phosphate. In Rhodopirellula baltica (strain DSM 10527 / NCIMB 13988 / SH1), this protein is Tryptophan synthase alpha chain.